Reading from the N-terminus, the 130-residue chain is Small ribosomal subunit protein uS8 (130 aa).

Belongs to the universal ribosomal protein uS8 family. In terms of assembly, part of the 30S ribosomal subunit.

Functionally, one of the primary rRNA binding proteins, it binds directly to 16S rRNA central domain where it helps coordinate assembly of the platform of the 30S subunit. The protein is Small ribosomal subunit protein uS8 of Methanococcoides burtonii (strain DSM 6242 / NBRC 107633 / OCM 468 / ACE-M).